The primary structure comprises 292 residues: Probable endonuclease 4 (292 aa).

Positions 71, 111, 148, 182, 185, 217, 230, 232, and 262 each coordinate Zn(2+).

The protein belongs to the AP endonuclease 2 family. The cofactor is Zn(2+).

The catalysed reaction is Endonucleolytic cleavage to 5'-phosphooligonucleotide end-products.. In terms of biological role, endonuclease IV plays a role in DNA repair. It cleaves phosphodiester bonds at apurinic or apyrimidinic (AP) sites, generating a 3'-hydroxyl group and a 5'-terminal sugar phosphate. This chain is Probable endonuclease 4, found in Aster yellows witches'-broom phytoplasma (strain AYWB).